A 125-amino-acid chain; its full sequence is Protein ApaG (125 aa).

Positions 3–125 (TAVTEGIEVT…FPLVVPGTLN (123 aa)) constitute an ApaG domain.

This is Protein ApaG from Anaeromyxobacter sp. (strain K).